Consider the following 281-residue polypeptide: ATP synthase gamma chain (281 aa).

The protein belongs to the ATPase gamma chain family. In terms of assembly, F-type ATPases have 2 components, CF(1) - the catalytic core - and CF(0) - the membrane proton channel. CF(1) has five subunits: alpha(3), beta(3), gamma(1), delta(1), epsilon(1). CF(0) has three main subunits: a, b and c.

Its subcellular location is the cell membrane. Its function is as follows. Produces ATP from ADP in the presence of a proton gradient across the membrane. The gamma chain is believed to be important in regulating ATPase activity and the flow of protons through the CF(0) complex. The chain is ATP synthase gamma chain from Clostridium pasteurianum.